The following is a 309-amino-acid chain: Homoserine O-acetyltransferase (309 aa).

The active-site Acyl-thioester intermediate is Cys-142. Lys-163 and Ser-192 together coordinate substrate. The active-site Proton acceptor is His-235. Glu-237 is a catalytic residue. A substrate-binding site is contributed by Arg-249.

This sequence belongs to the MetA family.

The protein localises to the cytoplasm. It catalyses the reaction L-homoserine + acetyl-CoA = O-acetyl-L-homoserine + CoA. It functions in the pathway amino-acid biosynthesis; L-methionine biosynthesis via de novo pathway; O-acetyl-L-homoserine from L-homoserine: step 1/1. In terms of biological role, transfers an acetyl group from acetyl-CoA to L-homoserine, forming acetyl-L-homoserine. The chain is Homoserine O-acetyltransferase from Methanomethylophilus alvi (strain Mx1201).